The primary structure comprises 379 residues: Homoserine O-succinyltransferase (379 aa).

Residues 51-360 (NAVLICHALS…DAPQGHDAFL (310 aa)) enclose the AB hydrolase-1 domain. Serine 157 acts as the Nucleophile in catalysis. Arginine 227 is a binding site for substrate. Active-site residues include aspartate 323 and histidine 356. Substrate is bound at residue aspartate 357.

It belongs to the AB hydrolase superfamily. MetX family. In terms of assembly, homodimer.

The protein resides in the cytoplasm. The enzyme catalyses L-homoserine + succinyl-CoA = O-succinyl-L-homoserine + CoA. It functions in the pathway amino-acid biosynthesis; L-methionine biosynthesis via de novo pathway; O-succinyl-L-homoserine from L-homoserine: step 1/1. In terms of biological role, transfers a succinyl group from succinyl-CoA to L-homoserine, forming succinyl-L-homoserine. In Stutzerimonas stutzeri (strain A1501) (Pseudomonas stutzeri), this protein is Homoserine O-succinyltransferase.